A 443-amino-acid polypeptide reads, in one-letter code: MISGDSIVALSSGRLPAGVAVLRISGPQTRFVVETIAGGMVKDRVAVLRRFKAPDGTVLDSGLVIFFPGPASFTGEDVAEFHVHGGRAVVARMLEIISGFDGVRHAEPGEFTRRAFLNGKVDLVETEALADLVNAETEAQRRFAVRNAEGVQSELYLSWRRRLIHARAMIEAEIDFADEDDVPGSVSDTVWSDVRAMIGEIDRHIAGFHAAEIIREGFEVVILGAPNAGKSSLFNALARRDAAIVTDEPGTTRDLLEVTLDLGGLRVRLTDTAGLREAPGKVEAIGIEKARAKADRADLLLLLEDILAPGVLGPLPGKAPLLRVGTKLDLLDEGSAREAAGRYDVAISVVGGTGVEALLAEIGRRAADAAGDVGDVLPSRLRHVELLGEANRHLLRAAAEDAAGQELRAEELRLAADSLGRIVGAIDVEDMLDVIFSQFCIGK.

Positions 23, 80, and 120 each coordinate (6S)-5-formyl-5,6,7,8-tetrahydrofolate. The region spanning 217–367 (GFEVVILGAP…LLAEIGRRAA (151 aa)) is the TrmE-type G domain. Residues 227 to 232 (NAGKSS), 246 to 252 (TDEPGTT), and 271 to 274 (DTAG) contribute to the GTP site. Residues Ser231 and Thr252 each contribute to the Mg(2+) site. Residue Lys443 coordinates (6S)-5-formyl-5,6,7,8-tetrahydrofolate.

This sequence belongs to the TRAFAC class TrmE-Era-EngA-EngB-Septin-like GTPase superfamily. TrmE GTPase family. In terms of assembly, homodimer. Heterotetramer of two MnmE and two MnmG subunits. K(+) is required as a cofactor.

The protein resides in the cytoplasm. In terms of biological role, exhibits a very high intrinsic GTPase hydrolysis rate. Involved in the addition of a carboxymethylaminomethyl (cmnm) group at the wobble position (U34) of certain tRNAs, forming tRNA-cmnm(5)s(2)U34. This chain is tRNA modification GTPase MnmE, found in Mesorhizobium japonicum (strain LMG 29417 / CECT 9101 / MAFF 303099) (Mesorhizobium loti (strain MAFF 303099)).